A 157-amino-acid polypeptide reads, in one-letter code: Putative pre-16S rRNA nuclease (157 aa).

Belongs to the YqgF nuclease family.

The protein resides in the cytoplasm. Could be a nuclease involved in processing of the 5'-end of pre-16S rRNA. The protein is Putative pre-16S rRNA nuclease of Parasynechococcus marenigrum (strain WH8102).